A 203-amino-acid chain; its full sequence is MKIRSSEITMSAVNKSQYPAEGIPEIALAGRSNVGKSSIINTLLNRRNFARTSQTPGKTRTINFYLINNEFYFVDLPGYGYAKIAKSEKEKWGGIMERYLESRQELCSIFLLVDIRHEPTADDKLMYEWIKHFGYNCVVIATKADKISRGQYQKHISIIRKKLQMESSEKVIPVSSLKKTGVEELWEEIVNQYNQHGYEITVD.

The EngB-type G domain maps to 22–195 (GIPEIALAGR…WEEIVNQYNQ (174 aa)). Residues 30-37 (GRSNVGKS), 57-61 (GKTRT), 75-78 (DLPG), 142-145 (TKAD), and 174-176 (VSS) contribute to the GTP site. The Mg(2+) site is built by Ser-37 and Thr-59.

The protein belongs to the TRAFAC class TrmE-Era-EngA-EngB-Septin-like GTPase superfamily. EngB GTPase family. Mg(2+) is required as a cofactor.

Functionally, necessary for normal cell division and for the maintenance of normal septation. This chain is Probable GTP-binding protein EngB, found in Clostridioides difficile (strain 630) (Peptoclostridium difficile).